The sequence spans 545 residues: Membrane protein insertase YidC (545 aa).

A helical transmembrane segment spans residues Asn-6–Asp-26. Residues Pro-31–Ala-54 are disordered. Transmembrane regions (helical) follow at residues Lys-342 to Val-362, Leu-417 to Leu-437, Leu-455 to Ile-475, and Pro-496 to Val-516.

Belongs to the OXA1/ALB3/YidC family. Type 1 subfamily. As to quaternary structure, interacts with the Sec translocase complex via SecD. Specifically interacts with transmembrane segments of nascent integral membrane proteins during membrane integration.

It is found in the cell inner membrane. In terms of biological role, required for the insertion and/or proper folding and/or complex formation of integral membrane proteins into the membrane. Involved in integration of membrane proteins that insert both dependently and independently of the Sec translocase complex, as well as at least some lipoproteins. Aids folding of multispanning membrane proteins. The protein is Membrane protein insertase YidC of Serratia proteamaculans (strain 568).